A 348-amino-acid polypeptide reads, in one-letter code: Dihydroorotase (348 aa).

Zn(2+)-binding residues include H17 and H19. Substrate is bound by residues 19–21 and N45; that span reads HLR. Zn(2+)-binding residues include K103, H140, and H178. K103 carries the N6-carboxylysine modification. H140 is a binding site for substrate. L223 provides a ligand contact to substrate. Residue D251 participates in Zn(2+) binding. D251 is an active-site residue. Residues H255 and A267 each contribute to the substrate site.

The protein belongs to the metallo-dependent hydrolases superfamily. DHOase family. Class II DHOase subfamily. In terms of assembly, homodimer. Requires Zn(2+) as cofactor.

It catalyses the reaction (S)-dihydroorotate + H2O = N-carbamoyl-L-aspartate + H(+). It functions in the pathway pyrimidine metabolism; UMP biosynthesis via de novo pathway; (S)-dihydroorotate from bicarbonate: step 3/3. Its function is as follows. Catalyzes the reversible cyclization of carbamoyl aspartate to dihydroorotate. This is Dihydroorotase from Serratia proteamaculans (strain 568).